The chain runs to 380 residues: ER-phagy receptor 1 (380 aa).

One can recognise a J domain in the interval 9-74 (DCYEILQVNH…DKRKWHEKDY (66 aa)). The segment at 270 to 294 (IMCMVCNKNFRSQNQLENHENSKKH) adopts a C2H2-type zinc-finger fold. Residues 307–337 (KHAKEAQKNAESNKQPEDAPSESPYSNKVSS) are disordered. A Phosphoserine modification is found at serine 344. The short motif at 352–355 (FTFV) is the AIM element. The short motif at 361–367 (EFYTASE) is the FFAT element.

As to quaternary structure, interacts (via the AIM motif) with atg8. Interacts (via the FFAT motif) with the vesicle-associated membrane protein-associated protein (VAP) family proteins scs2 and scs22.

Its subcellular location is the endoplasmic reticulum. The protein localises to the preautophagosomal structure. Reticulophagy receptor required for autophagosomal sequestration of endoplasmic reticulum (ER) membranes during ER stress. Confers resistance to ER stress by promoting the autophagic degradation of the ER (ER-phagy or reticulophagy). Acts as a bridging molecule to mediate the association between atg8 on the autophagic membrane and the vesicle-associated membrane protein-associated proteins (VAPs) scs2 and scs22 on the ER. May play a role in meiosis. The protein is ER-phagy receptor 1 of Schizosaccharomyces pombe (strain 972 / ATCC 24843) (Fission yeast).